The chain runs to 538 residues: Xylosidase/arabinosidase 43B (538 aa).

Catalysis depends on Glu-367, which acts as the Proton donor.

This sequence belongs to the glycosyl hydrolase 43 family.

The enzyme catalyses Hydrolysis of (1-&gt;4)-beta-D-xylans, to remove successive D-xylose residues from the non-reducing termini.. The catalysed reaction is Hydrolysis of terminal non-reducing alpha-L-arabinofuranoside residues in alpha-L-arabinosides.. Activity is inhibited by Ag(+), Li(+), Cu(2+), Cr(3+), Co(3+), Ni(2+), Mg(2+), Zn(2+), EDTA, SDS and beta-mercaptoethanol; but not by Mn(2+), Pb(2+), Ca(2+) and Fe(3+). Functionally, bifunctional beta-xylosidase/alpha-L-arabinosidases with a low level of xylanase activity. Is most active on 4-nitrophenyl beta-D-xylopyranoside (pNPX) (defined as 100%), moderate on p-nitrophenyl-alpha-L-arabinofuranoside (pNPA) (56.6%), and weak on beechwood xylan (5.7%) and birchwood xylan (2.7%). Is able to attack xylooligosacchardies with degrees of polymerisation of 2-5, releasing the amounts of reducing sugars in the order of xylopentose &gt; xylotetraose &gt; xylotriose &gt; xylobiose, i.e. the rate of xylose released from xylooligosacchardies increased with the chain length. No activity was detected in the presence of carboxymethyl cellulose-sodium (CMC-Na), sugar beet arabinan, AZCL-arabinan (debranched), 4-nitrophenyl a-D - galactopyranoside, 2-nitrophenyl beta-D-galactopyranoside, and 4-nitrophenyl alpha-D-glucopyranoside. The chain is Xylosidase/arabinosidase 43B from Humicola insolens (Soft-rot fungus).